The chain runs to 226 residues: MRRDDAAPVGWAVSTQPVPYPAAVAAMEARAAAIADGTAGELIWLLEHPPLYTAGVSAKAGDLIQPDRFPVFESGRGGQFTYHGPGQRVAYVMLDLTQRGRDVRAFVAALEAWIIDALAAFNVTGELREGRVGVWVERKGAGWSREDKIAAIGVKLRRWVSFHGISLNVEPDLSHFSGIVPCGQTEHGVTSLVDLGLPVTLDDADAALRASFSKVFGPVEDAEAPV.

Positions 37 to 220 (GTAGELIWLL…SFSKVFGPVE (184 aa)) constitute a BPL/LPL catalytic domain. Residues 76–83 (RGGQFTYH), 151–153 (AIG), and 164–166 (GIS) contribute to the substrate site. The Acyl-thioester intermediate role is filled by C182.

The protein belongs to the LipB family.

The protein localises to the cytoplasm. The enzyme catalyses octanoyl-[ACP] + L-lysyl-[protein] = N(6)-octanoyl-L-lysyl-[protein] + holo-[ACP] + H(+). The protein operates within protein modification; protein lipoylation via endogenous pathway; protein N(6)-(lipoyl)lysine from octanoyl-[acyl-carrier-protein]: step 1/2. Functionally, catalyzes the transfer of endogenously produced octanoic acid from octanoyl-acyl-carrier-protein onto the lipoyl domains of lipoate-dependent enzymes. Lipoyl-ACP can also act as a substrate although octanoyl-ACP is likely to be the physiological substrate. In Caulobacter vibrioides (strain ATCC 19089 / CIP 103742 / CB 15) (Caulobacter crescentus), this protein is Octanoyltransferase.